The sequence spans 185 residues: Chromobox protein homolog 1 (185 aa).

Glycyl lysine isopeptide (Lys-Gly) (interchain with G-Cter in SUMO2) cross-links involve residues K9 and K33. Positions 21 to 79 (YVVEKVLDRRVVKGKVEYLLKWKGFSDEDNTWEPEENLDCPDLIAEFLQSQKTAHETDK) constitute a Chromo 1 domain. The interval 63-124 (LIAEFLQSQK…RGLEPERIIG (62 aa)) is disordered. The segment covering 73–89 (TAHETDKSEGGKRKADS) has biased composition (basic and acidic residues). Phosphoserine occurs at positions 89 and 91. Residues 96–121 (EESKPKKKKEESEKPRGFARGLEPER) are compositionally biased toward basic and acidic residues. Residues K99 and K150 each participate in a glycyl lysine isopeptide (Lys-Gly) (interchain with G-Cter in SUMO2) cross-link. Positions 117 to 175 (LEPERIIGATDSSGELMFLMKWKNSDEADLVPAKEANVKCPQVVISFYEERLTWHSYPS) constitute a Chromo 2; shadow subtype domain. S175 is subject to Phosphoserine.

In terms of assembly, homodimer. Interacts directly with CHAF1A, EMSY, LBR, TIF1/TIF1A and TRIM28/TIF1B PXVXL motif via the chromoshadow domain. Interacts directly with histone H3 methylated at 'Lys-9' via the chromo domain. Interacts with SUV39H1 and SETDB1, KMT5B and KMT5C. Interacts with PRDM6. Interacts with POGZ. Interacts with CHAMP1. Interacts with INCENP. Interacts with SGO1; the CBX1 homodimer binds to one molecule of SGO1. Interacts with LRIF1 (via PxVxL motif). Interacts with HDGFL2. Interacts with CHD3. Interacts with CHD4. In terms of processing, not phosphorylated. Ubiquitinated. As to expression, expressed in all adult and embryonic tissues.

It localises to the nucleus. Functionally, component of heterochromatin. Recognizes and binds histone H3 tails methylated at 'Lys-9', leading to epigenetic repression. Interaction with lamin B receptor (LBR) can contribute to the association of the heterochromatin with the inner nuclear membrane. This is Chromobox protein homolog 1 (CBX1) from Homo sapiens (Human).